The chain runs to 252 residues: tRNA1(Val) (adenine(37)-N6)-methyltransferase (252 aa).

Belongs to the methyltransferase superfamily. tRNA (adenine-N(6)-)-methyltransferase family.

It is found in the cytoplasm. The catalysed reaction is adenosine(37) in tRNA1(Val) + S-adenosyl-L-methionine = N(6)-methyladenosine(37) in tRNA1(Val) + S-adenosyl-L-homocysteine + H(+). Specifically methylates the adenine in position 37 of tRNA(1)(Val) (anticodon cmo5UAC). In Proteus mirabilis (strain HI4320), this protein is tRNA1(Val) (adenine(37)-N6)-methyltransferase.